We begin with the raw amino-acid sequence, 429 residues long: Glutamate-1-semialdehyde 2,1-aminomutase (429 aa).

Lys267 is modified (N6-(pyridoxal phosphate)lysine).

Belongs to the class-III pyridoxal-phosphate-dependent aminotransferase family. HemL subfamily. In terms of assembly, homodimer. Requires pyridoxal 5'-phosphate as cofactor.

It is found in the cytoplasm. It catalyses the reaction (S)-4-amino-5-oxopentanoate = 5-aminolevulinate. It functions in the pathway porphyrin-containing compound metabolism; protoporphyrin-IX biosynthesis; 5-aminolevulinate from L-glutamyl-tRNA(Glu): step 2/2. In Stenotrophomonas maltophilia (strain R551-3), this protein is Glutamate-1-semialdehyde 2,1-aminomutase.